Reading from the N-terminus, the 231-residue chain is 2-amino-5-formylamino-6-ribosylaminopyrimidin-4(3H)-one 5'-monophosphate deformylase (231 aa).

The Fe cation site is built by Glu29, His31, Asp40, and His110.

This sequence belongs to the creatininase superfamily. FAPy deformylase family. In terms of assembly, homodimer. Fe(2+) serves as cofactor. Zn(2+) is required as a cofactor.

It carries out the reaction 2-amino-5-formylamino-6-(5-phospho-D-ribosylamino)pyrimidin-4(3H)-one + H2O = 2,5-diamino-6-(1-D-ribosylamino)pyrimidin-4(3H)-one 5'-phosphate + formate + H(+). It functions in the pathway cofactor biosynthesis; coenzyme F420 biosynthesis. Its pathway is cofactor biosynthesis; riboflavin biosynthesis. In terms of biological role, catalyzes the hydrolysis of the formamide of 2-amino-5-formylamino-6-ribosylamino-4(3H)-pyrimidinone 5'-monophosphate (FAPy) to form 2,5-diamino-6-ribosylamino-4(3H)-pyrimidinone 5'-phosphate (APy). In Methanothermobacter marburgensis (strain ATCC BAA-927 / DSM 2133 / JCM 14651 / NBRC 100331 / OCM 82 / Marburg) (Methanobacterium thermoautotrophicum), this protein is 2-amino-5-formylamino-6-ribosylaminopyrimidin-4(3H)-one 5'-monophosphate deformylase.